Here is a 219-residue protein sequence, read N- to C-terminus: uncharacterized protein (219 aa).

In terms of domain architecture, RRM spans 30–107 (FRLFVGNLGN…RPVKLSRATS (78 aa)). Residues 140 to 149 (KKIKNKHGKN) are compositionally biased toward basic residues. The segment at 140-219 (KKIKNKHGKN…YSRASSFRRV (80 aa)) is disordered. Residues 150–169 (SSKSSRAAQSAAAELISSSS) show a composition bias toward low complexity. Residues 176-186 (ANSTSVPNAVN) show a composition bias toward polar residues.

This is an uncharacterized protein from Schizosaccharomyces pombe (strain 972 / ATCC 24843) (Fission yeast).